A 258-amino-acid chain; its full sequence is Histidine/lysine/arginine/ornithine transport ATP-binding protein HisP (258 aa).

Residues Leu-7–Leu-253 enclose the ABC transporter domain. ATP-binding residues include Ser-41, Gly-42, Gly-44, Lys-45, Ser-46, and Thr-47.

This sequence belongs to the ABC transporter superfamily. The HisPMQJ complex is composed of two ATP-binding proteins (HisP), two transmembrane proteins (HisM and HisQ) and a solute-binding protein (HisJ). The HisPMQ-ArgT complex is composed of two ATP-binding proteins (HisP), two transmembrane proteins (HisM and HisQ) and a solute-binding protein (ArgT).

The protein localises to the cell inner membrane. The catalysed reaction is a polar amino acid(out) + ATP + H2O = a polar amino acid(in) + ADP + phosphate + H(+). It catalyses the reaction L-histidine(out) + ATP + H2O = L-histidine(in) + ADP + phosphate + H(+). It carries out the reaction L-lysine(out) + ATP + H2O = L-lysine(in) + ADP + phosphate + H(+). The enzyme catalyses L-arginine(out) + ATP + H2O = L-arginine(in) + ADP + phosphate + H(+). The catalysed reaction is L-ornithine(out) + ATP + H2O = L-ornithine(in) + ADP + phosphate + H(+). With respect to regulation, isolated, soluble HisP has a very low ATPase activity. ATPase activity is slightly increased in the presence of HisM and HisQ, and strongly increased when HisJ is also present. Functionally, part of the ABC transporter complex HisPMQJ involved in histidine transport. Is also part of the ABC transporter complex HisPMQ-ArgT involved in lysine/arginine/ornithine transport. Shows ATPase activity. Responsible for energy coupling to the transport system. The protein is Histidine/lysine/arginine/ornithine transport ATP-binding protein HisP of Salmonella typhimurium (strain LT2 / SGSC1412 / ATCC 700720).